The primary structure comprises 424 residues: Histidine--tRNA ligase (424 aa).

The protein belongs to the class-II aminoacyl-tRNA synthetase family. As to quaternary structure, homodimer.

The protein localises to the cytoplasm. It catalyses the reaction tRNA(His) + L-histidine + ATP = L-histidyl-tRNA(His) + AMP + diphosphate + H(+). The protein is Histidine--tRNA ligase (hisS) of Bacillus subtilis (strain 168).